We begin with the raw amino-acid sequence, 173 residues long: Alpha-crystallin A chain (173 aa).

Met-1 is subject to N-acetylmethionine. The interval 1–63 (MDIAIQHPWF…RTVLDSGISE (63 aa)) is required for complex formation with BFSP1 and BFSP2. Residue Gln-6 is modified to Deamidated glutamine; partial. N-linked (Glc) (glycation) lysine glycosylation is present at Lys-11. A Phosphoserine modification is found at Ser-45. Deamidated glutamine; partial is present on Gln-50. One can recognise a sHSP domain in the interval 52 to 162 (LFRTVLDSGI…GHSERAIPVS (111 aa)). The residue at position 70 (Lys-70) is an N6-acetyllysine. Lys-78 carries N-linked (Glc) (glycation) lysine glycosylation. Gln-90 is modified (deamidated glutamine; partial). The residue at position 99 (Lys-99) is an N6-acetyllysine. A Zn(2+)-binding site is contributed by His-100. Asn-101 carries the deamidated asparagine; partial modification. Zn(2+) is bound by residues Glu-102 and His-107. Phosphoserine is present on Ser-122. Asn-123 is subject to Deamidated asparagine; partial. The interval 144 to 173 (PKIPSGVDAGHSERAIPVSREEKPSSAPSS) is disordered. A compositionally biased stretch (basic and acidic residues) spans 153–167 (GHSERAIPVSREEKP). A Zn(2+)-binding site is contributed by His-154. The tract at residues 157-163 (RAIPVSR) is important for oligomerization. An O-linked (GlcNAc) serine glycan is attached at Ser-162.

This sequence belongs to the small heat shock protein (HSP20) family. In terms of assembly, heteromer composed of three CRYAA and one CRYAB subunits. Inter-subunit bridging via zinc ions enhances stability, which is crucial as there is no protein turn over in the lens. Can also form homodimers and homotetramers (dimers of dimers) which serve as the building blocks of homooligomers. Within homooligomers, the zinc-binding motif is created from residues of 3 different molecules. His-100 and Glu-102 from one molecule are ligands of the zinc ion, and His-107 and His-154 residues from additional molecules complete the site with tetrahedral coordination geometry. Part of a complex required for lens intermediate filament formation composed of BFSP1, BFSP2 and CRYAA. Post-translationally, acetylation at Lys-70 may increase chaperone activity. Undergoes age-dependent proteolytical cleavage at the C-terminus.

Its subcellular location is the cytoplasm. It localises to the nucleus. Functionally, contributes to the transparency and refractive index of the lens. Acts as a chaperone, preventing aggregation of various proteins under a wide range of stress conditions. Required for the correct formation of lens intermediate filaments as part of a complex composed of BFSP1, BFSP2 and CRYAA. This Bos taurus (Bovine) protein is Alpha-crystallin A chain (CRYAA).